The primary structure comprises 159 residues: MATLIRLLRLLPVASSSAVLMFALDEHLIFGTWVQPSIRERANANLPAWWTRGGLRWRWVLIIFYPVNYILGILNLFISQDQLQDTGASKWYTLGLLFSIAHMFYLFRALKLIAAIENDEPKGNVTYSMGRWLKMNWTRALLTDLPAWLCFIAAALKAL.

A signal peptide spans Met1–Asp25. The next 2 membrane-spanning stretches (helical) occupy residues Trp59 to Ser79 and Leu96 to Ile116. N-linked (GlcNAc...) asparagine glycans are attached at residues Asn124 and Asn136. The helical transmembrane segment at Arg139–Leu159 threads the bilayer.

The protein belongs to the epoxidase xenD family.

It is found in the membrane. The protein operates within mycotoxin biosynthesis. Probable epoxidase; part of the gene scp cluster that mediates the biosynthesis of a hirsutellone-like compound that has still to be identified. The protein is Probable epoxidase scpX of Mollisia scopiformis (Conifer needle endophyte fungus).